The chain runs to 597 residues: Arginine--tRNA ligase (597 aa).

The 'HIGH' region signature appears at P125–H135.

It belongs to the class-I aminoacyl-tRNA synthetase family. As to quaternary structure, monomer.

It localises to the cytoplasm. It catalyses the reaction tRNA(Arg) + L-arginine + ATP = L-arginyl-tRNA(Arg) + AMP + diphosphate. The polypeptide is Arginine--tRNA ligase (Porphyromonas gingivalis (strain ATCC 33277 / DSM 20709 / CIP 103683 / JCM 12257 / NCTC 11834 / 2561)).